Here is a 612-residue protein sequence, read N- to C-terminus: uncharacterized protein (612 aa).

The J domain occupies 8-75 (ELYLALGLPK…SKKEIYDNFG (68 aa)). Residues 445-465 (AVFWGLVFPITSILGVEQFFL) form a helical membrane-spanning segment.

The protein belongs to the DnaJ family.

Its subcellular location is the membrane. This is an uncharacterized protein from Schizosaccharomyces pombe (strain 972 / ATCC 24843) (Fission yeast).